The sequence spans 229 residues: Ras-related protein Rab-33B (229 aa).

GTP is bound by residues Asn43, Val44, Gly45, Lys46, Thr47, Cys48, Thr62, and Thr65. Thr47 serves as a coordination point for Mg(2+). The Switch 1 motif lies at 56–68 (GRFPDRTEATIGV). Thr65 and Asp88 together coordinate Mg(2+). The Switch 2 signature appears at 89–108 (TAGQERFRKSMVQHYYRNVH). 6 residues coordinate GTP: Gly91, Asn148, Lys149, Asp151, Ala179, and Lys180. S-geranylgeranyl cysteine attachment occurs at residues Cys227 and Cys229. Cys229 bears the Cysteine methyl ester mark.

This sequence belongs to the small GTPase superfamily. Rab family. As to quaternary structure, interacts (GTP- and GDP-bound forms) with ATG16L1; the complex consists of a tetramer where two RAB33B molecules bind independently one molecule of the ATG16L1 homodimer; the interaction promotes ATG12-ATG5-ATG16L1 complex recruitment to phagophores. Interacts with ATG16L2; however interaction is approximately hundred times lower than for ATG16L1. Interacts with RIC1 (via C-terminus domain); the interaction is direct with a preference for RAB33B-GTP. Interacts with RGP1. Mg(2+) serves as cofactor. In terms of processing, prenylated. As to expression, ubiquitous.

Its subcellular location is the golgi apparatus membrane. It localises to the golgi apparatus. It is found in the cis-Golgi network. The protein localises to the preautophagosomal structure membrane. The catalysed reaction is GTP + H2O = GDP + phosphate + H(+). With respect to regulation, regulated by guanine nucleotide exchange factors (GEFs) which promote the exchange of bound GDP for free GTP. Regulated by GTPase activating proteins (GAPs) such as SGSM2 which increase the GTP hydrolysis activity. Inhibited by GDP dissociation inhibitors (GDIs). The small GTPases Rab are key regulators of intracellular membrane trafficking, from the formation of transport vesicles to their fusion with membranes. Rabs cycle between an inactive GDP-bound form and an active GTP-bound form that is able to recruit to membranes different sets of downstream effectors directly responsible for vesicle formation, movement, tethering and fusion. RAB33B acts, in coordination with RAB6A, to regulate intra-Golgi retrograde trafficking. Participates in autophagosome formation by recruiting the ATG12-ATG5-ATG16L1 complex to phagophores, probably in a nucleotide-independent manner. This Mus musculus (Mouse) protein is Ras-related protein Rab-33B.